The following is a 342-amino-acid chain: Phosphate acyltransferase (342 aa).

Belongs to the PlsX family. As to quaternary structure, homodimer. Probably interacts with PlsY.

It is found in the cytoplasm. The catalysed reaction is a fatty acyl-[ACP] + phosphate = an acyl phosphate + holo-[ACP]. It participates in lipid metabolism; phospholipid metabolism. Its function is as follows. Catalyzes the reversible formation of acyl-phosphate (acyl-PO(4)) from acyl-[acyl-carrier-protein] (acyl-ACP). This enzyme utilizes acyl-ACP as fatty acyl donor, but not acyl-CoA. This is Phosphate acyltransferase from Shewanella baltica (strain OS155 / ATCC BAA-1091).